Here is a 123-residue protein sequence, read N- to C-terminus: Hydrogenase maturation factor HypA (123 aa).

His-2 serves as a coordination point for Ni(2+). Residues Cys-77, Cys-80, Cys-96, and Cys-99 each coordinate Zn(2+).

Belongs to the HypA/HybF family.

Its function is as follows. Involved in the maturation of [NiFe] hydrogenases. Required for nickel insertion into the metal center of the hydrogenase. In Methanococcus aeolicus (strain ATCC BAA-1280 / DSM 17508 / OCM 812 / Nankai-3), this protein is Hydrogenase maturation factor HypA.